We begin with the raw amino-acid sequence, 398 residues long: Lipase member K (398 aa).

Residues 1–19 form the signal peptide; that stretch reads MWWLLATTCCVLLSGPIDG. Residues 78 to 377 form the AB hydrolase-1 domain; sequence VVYLQHGLIA…HYNHMDFYLG (300 aa). Serine 171 acts as the Nucleophile in catalysis. Cysteine 245 and cysteine 254 form a disulfide bridge. Residues asparagine 270 and asparagine 326 are each glycosylated (N-linked (GlcNAc...) asparagine). Residues aspartate 342 and histidine 371 each act as charge relay system in the active site.

This sequence belongs to the AB hydrolase superfamily. Lipase family.

It is found in the secreted. Functionally, plays a highly specific role in the last step of keratinocyte differentiation. May have an essential function in lipid metabolism of the most differentiated epidermal layers. In Mus musculus (Mouse), this protein is Lipase member K (Lipk).